We begin with the raw amino-acid sequence, 848 residues long: Aryl hydrocarbon receptor (848 aa).

Positions 1 to 9 (MSSGANITY) are excised as a propeptide. A disordered region spans residues 1-38 (MSSGANITYASRKRRKPVQKTVKPIPAEGIKSNPSKRH). Short sequence motifs (nuclear localization signal) lie at residues 12–15 (RKRR) and 36–41 (KRHRDR). The bHLH domain maps to 26–79 (PAEGIKSNPSKRHRDRLNTELDRLASLLPFPQDVINKLDKLSVLRLSVSYLRAK). Residues 37–65 (RHRDRLNTELDRLASLLPFPQDVINKLDK) form a DNA-binding region. Required for maintaining the overall integrity of the AHR:ARNT heterodimer and its transcriptional activity regions lie at residues 49–81 (LASL…AKSF), 116–124 (LLQALNGFV), and 260–262 (FAI). Residues 63 to 71 (LDKLSVLRL) carry the Nuclear export signal motif. Positions 116–179 (LLQALNGFVL…RQLHWALNPD (64 aa)) constitute a PAS 1 domain. A PAS 2 domain is found at 269–336 (PSILEIRTKN…CAESHIRMIK (68 aa)). One can recognise a PAC domain in the interval 342–380 (MTVFRLFAKHSRWRWVQSNARLIYRNGRPDYIIATQRPL). The segment at 421–449 (LPIRTKSNTSRKDWAPQSTPSKDSFHPSS) is disordered. Over residues 436–449 (PQSTPSKDSFHPSS) the composition is skewed to polar residues.

As to quaternary structure, homodimer. Heterodimer; efficient DNA binding requires dimerization with another bHLH protein. Interacts with ARNT; the heterodimer ARNT:AHR binds to core DNA sequence 5'-TGCGTG-3' within the dioxin response element (DRE) of target gene promoters and activates their transcription. Binds MYBBP1A. Interacts with coactivators including SRC-1, RIP140 and NOCA7, and with the corepressor SMRT. Interacts with NEDD8 and IVNS1ABP. Interacts with BMAL1. Interacts with HSP90AB1. Interacts with TIPARP; leading to mono-ADP-ribosylation of AHR and subsequent inhibition of AHR. In terms of processing, mono-ADP-ribosylated, leading to inhibit transcription activator activity of AHR. As to expression, expressed in all tissues tested including brain, heart, kidney, liver, lung, muscle, ovary, skin, spleen and thymus.

The protein localises to the cytoplasm. It is found in the nucleus. Functionally, ligand-activated transcription factor that enables cells to adapt to changing conditions by sensing compounds from the environment, diet, microbiome and cellular metabolism, and which plays important roles in development, immunity and cancer. Upon ligand binding, translocates into the nucleus, where it heterodimerizes with ARNT and induces transcription by binding to xenobiotic response elements (XRE). Regulates a variety of biological processes, including angiogenesis, hematopoiesis, drug and lipid metabolism, cell motility and immune modulation. Xenobiotics can act as ligands: upon xenobiotic-binding, activates the expression of multiple phase I and II xenobiotic chemical metabolizing enzyme genes (such as the CYP1A1 gene). Mediates biochemical and toxic effects of halogenated aromatic hydrocarbons. Next to xenobiotics, natural ligands derived from plants, microbiota, and endogenous metabolism are potent AHR agonists. Tryptophan (Trp) derivatives constitute an important class of endogenous AHR ligands. Acts as a negative regulator of anti-tumor immunity: indoles and kynurenic acid generated by Trp catabolism act as ligand and activate AHR, thereby promoting AHR-driven cancer cell motility and suppressing adaptive immunity. Regulates the circadian clock by inhibiting the basal and circadian expression of the core circadian component PER1. Inhibits PER1 by repressing the CLOCK-BMAL1 heterodimer mediated transcriptional activation of PER1. The heterodimer ARNT:AHR binds to core DNA sequence 5'-TGCGTG-3' within the dioxin response element (DRE) of target gene promoters and activates their transcription. The polypeptide is Aryl hydrocarbon receptor (Ahr) (Mus musculus (Mouse)).